Here is an 85-residue protein sequence, read N- to C-terminus: Large ribosomal subunit protein bL27 (85 aa).

The tract at residues 1–21 (MAHKKGGGTTRNGRDSESKRL) is disordered.

The protein belongs to the bacterial ribosomal protein bL27 family.

This Janthinobacterium sp. (strain Marseille) (Minibacterium massiliensis) protein is Large ribosomal subunit protein bL27.